The following is a 251-amino-acid chain: 3-deoxy-manno-octulosonate cytidylyltransferase (251 aa).

The protein belongs to the KdsB family.

It localises to the cytoplasm. It catalyses the reaction 3-deoxy-alpha-D-manno-oct-2-ulosonate + CTP = CMP-3-deoxy-beta-D-manno-octulosonate + diphosphate. Its pathway is nucleotide-sugar biosynthesis; CMP-3-deoxy-D-manno-octulosonate biosynthesis; CMP-3-deoxy-D-manno-octulosonate from 3-deoxy-D-manno-octulosonate and CTP: step 1/1. It functions in the pathway bacterial outer membrane biogenesis; lipopolysaccharide biosynthesis. In terms of biological role, activates KDO (a required 8-carbon sugar) for incorporation into bacterial lipopolysaccharide in Gram-negative bacteria. The polypeptide is 3-deoxy-manno-octulosonate cytidylyltransferase (Chromobacterium violaceum (strain ATCC 12472 / DSM 30191 / JCM 1249 / CCUG 213 / NBRC 12614 / NCIMB 9131 / NCTC 9757 / MK)).